The sequence spans 120 residues: NAD(P)H-quinone oxidoreductase subunit 3 (120 aa).

The next 3 helical transmembrane spans lie at 6-26 (GYDA…LALV), 64-84 (MFAL…PWAV), and 89-109 (LGLL…VALA).

The protein belongs to the complex I subunit 3 family. NDH-1 can be composed of about 15 different subunits; different subcomplexes with different compositions have been identified which probably have different functions.

The protein resides in the cellular thylakoid membrane. The enzyme catalyses a plastoquinone + NADH + (n+1) H(+)(in) = a plastoquinol + NAD(+) + n H(+)(out). It carries out the reaction a plastoquinone + NADPH + (n+1) H(+)(in) = a plastoquinol + NADP(+) + n H(+)(out). Functionally, NDH-1 shuttles electrons from an unknown electron donor, via FMN and iron-sulfur (Fe-S) centers, to quinones in the respiratory and/or the photosynthetic chain. The immediate electron acceptor for the enzyme in this species is believed to be plastoquinone. Couples the redox reaction to proton translocation, and thus conserves the redox energy in a proton gradient. Cyanobacterial NDH-1 also plays a role in inorganic carbon-concentration. This Prochlorococcus marinus (strain MIT 9211) protein is NAD(P)H-quinone oxidoreductase subunit 3.